A 560-amino-acid chain; its full sequence is Developmental and secondary metabolism regulator veA (560 aa).

Residues Gly-35–Arg-241 enclose the Velvet domain. Residues Glu-49–Cys-54 carry the Nuclear localization signal motif. 3 disordered regions span residues Glu-49–Pro-70, Lys-171–Gly-197, and Asp-250–Tyr-560. A compositionally biased stretch (basic and acidic residues) spans Lys-171–Glu-183. Residues Ala-336–Pro-355 show a composition bias toward pro residues. The segment covering Pro-395 to Arg-405 has biased composition (basic and acidic residues). Pro residues predominate over residues Gln-411–Leu-439. The span at Ile-444–Arg-453 shows a compositional bias: polar residues. The tract at residues Pro-455 to Thr-496 is PEST. Over residues Ala-461 to Leu-479 the composition is skewed to low complexity. 2 stretches are compositionally biased toward basic and acidic residues: residues Arg-508–Asp-535 and Arg-546–Tyr-560.

This sequence belongs to the velvet family. VeA subfamily. Component of the heterotrimeric velvet complex composed of laeA, veA and velB; VeA acting as a bridging protein between laeA and velB.

It is found in the nucleus. It localises to the cytoplasm. In terms of biological role, component of the velvet transcription factor complex that controls sexual/asexual developmental ratio in response to light, promoting sexual development in the darkness while stimulating asexual sporulation under illumination. The velvet complex acts as a global regulator for secondary metabolite gene expression. Positively regulates chaetoglobosin A biosynthesis by controlling the expression of core genes of the chaetoglobosin A biosynthetic gene cluster and other relevant regulators in a light-dependent manner. VeA directly regulates transcription factors brlA, laeA, and the chaetoglobosin A cluster-specific transcription regulator cheR. Also directly regulates the expression of one of the chaetoglobosin A cluster cytochrome P450 monooxygenases (cheE or cheG), but only indirectly regulates the expression of the PKS-NRPS hybrid cheA. Moreover, VeA has a significant effect on the asexual spores production, irrespective of light or dark condition. In Chaetomium globosum (strain ATCC 6205 / CBS 148.51 / DSM 1962 / NBRC 6347 / NRRL 1970) (Soil fungus), this protein is Developmental and secondary metabolism regulator veA.